The chain runs to 964 residues: Glycine dehydrogenase (decarboxylating) (964 aa).

The segment covering 1–11 has biased composition (polar residues); sequence MNSTLQNQTKT. The segment at 1-21 is disordered; that stretch reads MNSTLQNQTKTNLEKVGTDPL. N6-(pyridoxal phosphate)lysine is present on Lys713.

This sequence belongs to the GcvP family. As to quaternary structure, the glycine cleavage system is composed of four proteins: P, T, L and H. Pyridoxal 5'-phosphate serves as cofactor.

The catalysed reaction is N(6)-[(R)-lipoyl]-L-lysyl-[glycine-cleavage complex H protein] + glycine + H(+) = N(6)-[(R)-S(8)-aminomethyldihydrolipoyl]-L-lysyl-[glycine-cleavage complex H protein] + CO2. The glycine cleavage system catalyzes the degradation of glycine. The P protein binds the alpha-amino group of glycine through its pyridoxal phosphate cofactor; CO(2) is released and the remaining methylamine moiety is then transferred to the lipoamide cofactor of the H protein. In Leptospira interrogans serogroup Icterohaemorrhagiae serovar Lai (strain 56601), this protein is Glycine dehydrogenase (decarboxylating).